The sequence spans 124 residues: Small ribosomal subunit protein bS6 (124 aa).

Residues 105 to 115 (EVQHEEARKSA) are compositionally biased toward basic and acidic residues. A disordered region spans residues 105-124 (EVQHEEARKSAQSDAPVAAA).

The protein belongs to the bacterial ribosomal protein bS6 family.

Binds together with bS18 to 16S ribosomal RNA. The chain is Small ribosomal subunit protein bS6 from Polynucleobacter necessarius subsp. necessarius (strain STIR1).